The chain runs to 141 residues: uncharacterized protein (141 aa).

This is an uncharacterized protein from Listeria innocua serovar 6a (strain ATCC BAA-680 / CLIP 11262).